We begin with the raw amino-acid sequence, 463 residues long: uncharacterized protein (463 aa).

Transmembrane regions (helical) follow at residues 3–23 (IPPE…SLLV), 88–108 (VAAA…AELA), 112–132 (AIHG…PIAL), 216–236 (FSPA…DFLW), 245–265 (LLLL…SALI), and 276–296 (LPIA…AVAV). Positions 303–322 (VPGGSPPTSNPAPAAPSSNS) are disordered. Positions 306–316 (GSPPTSNPAPA) are enriched in pro residues. The next 2 helical transmembrane spans lie at 323 to 343 (VGSA…APPG) and 419 to 439 (AGTL…AGMV).

It belongs to the mycobacterial PPE family.

It is found in the cell membrane. This is an uncharacterized protein from Mycobacterium tuberculosis (strain CDC 1551 / Oshkosh).